The chain runs to 323 residues: Aspartate carbamoyltransferase catalytic subunit (323 aa).

Arginine 71 and threonine 72 together coordinate carbamoyl phosphate. Residue lysine 99 participates in L-aspartate binding. Residues arginine 121, histidine 151, and glutamine 154 each coordinate carbamoyl phosphate. The L-aspartate site is built by arginine 184 and arginine 239. Carbamoyl phosphate contacts are provided by glycine 280 and proline 281.

It belongs to the aspartate/ornithine carbamoyltransferase superfamily. ATCase family. Heterododecamer (2C3:3R2) of six catalytic PyrB chains organized as two trimers (C3), and six regulatory PyrI chains organized as three dimers (R2).

It carries out the reaction carbamoyl phosphate + L-aspartate = N-carbamoyl-L-aspartate + phosphate + H(+). It functions in the pathway pyrimidine metabolism; UMP biosynthesis via de novo pathway; (S)-dihydroorotate from bicarbonate: step 2/3. In terms of biological role, catalyzes the condensation of carbamoyl phosphate and aspartate to form carbamoyl aspartate and inorganic phosphate, the committed step in the de novo pyrimidine nucleotide biosynthesis pathway. In Cupriavidus metallidurans (strain ATCC 43123 / DSM 2839 / NBRC 102507 / CH34) (Ralstonia metallidurans), this protein is Aspartate carbamoyltransferase catalytic subunit.